We begin with the raw amino-acid sequence, 354 residues long: Fructose-bisphosphate aldolase (354 aa).

S61 contributes to the D-glyceraldehyde 3-phosphate binding site. The active-site Proton donor is the D104. 4 residues coordinate Zn(2+): H105, D139, E169, and H221. Dihydroxyacetone phosphate is bound at residue G222. H260 lines the Zn(2+) pocket. Dihydroxyacetone phosphate contacts are provided by residues 261-263 and 282-285; these read GGS and NIDT.

The protein belongs to the class II fructose-bisphosphate aldolase family. In terms of assembly, homodimer. Zn(2+) serves as cofactor.

It catalyses the reaction beta-D-fructose 1,6-bisphosphate = D-glyceraldehyde 3-phosphate + dihydroxyacetone phosphate. It participates in carbohydrate degradation; glycolysis; D-glyceraldehyde 3-phosphate and glycerone phosphate from D-glucose: step 4/4. Its function is as follows. Catalyzes the aldol condensation of dihydroxyacetone phosphate (DHAP or glycerone-phosphate) with glyceraldehyde 3-phosphate (G3P) to form fructose 1,6-bisphosphate (FBP) in gluconeogenesis and the reverse reaction in glycolysis. The chain is Fructose-bisphosphate aldolase (fba) from Campylobacter jejuni subsp. jejuni serotype O:23/36 (strain 81-176).